The sequence spans 145 residues: Early nodulin-like protein 21 (145 aa).

The signal sequence occupies residues 1-17; sequence MFLWLVIVLTISASVSS. The Phytocyanin domain maps to 18-116; the sequence is YEHKLNWVVP…GQKMIVEVIS (99 aa). 2 N-linked (GlcNAc...) asparagine glycosylation sites follow: Asn-30 and Asn-71. Cys-70 and Cys-104 are joined by a disulfide. Ser-116 carries the GPI-anchor amidated serine lipid modification. The propeptide at 117-145 is removed in mature form; sequence RDHTTTSAAPPAAFAVLLCFFSLSLYFVA.

This sequence belongs to the early nodulin-like (ENODL) family. In terms of tissue distribution, mostly expressed in leaves and flowers, and, to a lower extent, in roots and stems, but barely in seedlings and seeds.

The protein localises to the cell membrane. Functionally, may act as a carbohydrate transporter. In Arabidopsis thaliana (Mouse-ear cress), this protein is Early nodulin-like protein 21.